Consider the following 283-residue polypeptide: Pantothenate synthetase (283 aa).

30 to 37 provides a ligand contact to ATP; sequence MGNLHAGH. The Proton donor role is filled by His37. Residue Gln61 coordinates (R)-pantoate. Gln61 provides a ligand contact to beta-alanine. 149 to 152 provides a ligand contact to ATP; it reads GEKD. Gln155 lines the (R)-pantoate pocket. ATP contacts are provided by residues Val178 and 186 to 189; that span reads LSSR.

This sequence belongs to the pantothenate synthetase family. In terms of assembly, homodimer.

The protein localises to the cytoplasm. The enzyme catalyses (R)-pantoate + beta-alanine + ATP = (R)-pantothenate + AMP + diphosphate + H(+). It participates in cofactor biosynthesis; (R)-pantothenate biosynthesis; (R)-pantothenate from (R)-pantoate and beta-alanine: step 1/1. In terms of biological role, catalyzes the condensation of pantoate with beta-alanine in an ATP-dependent reaction via a pantoyl-adenylate intermediate. This is Pantothenate synthetase from Pseudomonas paraeruginosa (strain DSM 24068 / PA7) (Pseudomonas aeruginosa (strain PA7)).